Reading from the N-terminus, the 373-residue chain is Anhydro-N-acetylmuramic acid kinase (373 aa).

Position 12-19 (12-19 (GTSLDGVD)) interacts with ATP.

This sequence belongs to the anhydro-N-acetylmuramic acid kinase family.

The catalysed reaction is 1,6-anhydro-N-acetyl-beta-muramate + ATP + H2O = N-acetyl-D-muramate 6-phosphate + ADP + H(+). Its pathway is amino-sugar metabolism; 1,6-anhydro-N-acetylmuramate degradation. It functions in the pathway cell wall biogenesis; peptidoglycan recycling. In terms of biological role, catalyzes the specific phosphorylation of 1,6-anhydro-N-acetylmuramic acid (anhMurNAc) with the simultaneous cleavage of the 1,6-anhydro ring, generating MurNAc-6-P. Is required for the utilization of anhMurNAc either imported from the medium or derived from its own cell wall murein, and thus plays a role in cell wall recycling. This Salmonella agona (strain SL483) protein is Anhydro-N-acetylmuramic acid kinase.